A 1240-amino-acid polypeptide reads, in one-letter code: Selection and upkeep of intraepithelial T-cells protein 6 (1240 aa).

A signal peptide spans 1-24 (MGTIGVPLTAHCVVLFLLQMVALS). Over 25 to 1086 (TEQFTVNGLE…CNKRNPFWKK (1062 aa)) the chain is Extracellular. In terms of domain architecture, Ig-like V-type spans 26–141 (EQFTVNGLES…EEHIIEVKVT (116 aa)). The cysteines at positions 49 and 123 are disulfide-linked. One can recognise an Ig-like C1-type domain in the interval 142–231 (ATSSDIQILM…FVTHQEESIS (90 aa)). N-linked (GlcNAc...) asparagine glycosylation is found at Asn155, Asn200, and Asn314. A disulfide bridge links Cys163 with Cys217. The helical transmembrane segment at 1087-1107 (HALDLGISVFAIIVVTLIRHL) threads the bilayer. Residues 1108-1125 (NQREADQHFELDTLWSKD) are Cytoplasmic-facing. The helical transmembrane segment at 1126–1146 (TSVILCVLIMFNNRLKALIYF) threads the bilayer. The Extracellular portion of the chain corresponds to 1147-1167 (RLYGYSPPGKTYKYIVNYILR). A helical membrane pass occupies residues 1168 to 1188 (FSQPLFFIVYSAIILVMHLQI). Over 1189-1205 (QNTDSLFSLYNSWMVEM) the chain is Cytoplasmic. A helical membrane pass occupies residues 1206–1226 (IMVLGLLLAIFNVKNIATALL). Over 1227 to 1240 (HLGRTTLRLFRIKD) the chain is Extracellular.

Belongs to the SKINT family. Expressed in skin.

Its subcellular location is the membrane. Its function is as follows. May act by engaging a cell surface molecule on immature T-cells in the embryonic thymus. The polypeptide is Selection and upkeep of intraepithelial T-cells protein 6 (Skint6) (Mus musculus (Mouse)).